A 271-amino-acid chain; its full sequence is Probable ribosomal RNA small subunit methyltransferase A (271 aa).

S-adenosyl-L-methionine-binding residues include His19, Leu21, Gly46, Glu67, Asp92, and Asn107.

It belongs to the class I-like SAM-binding methyltransferase superfamily. rRNA adenine N(6)-methyltransferase family. RsmA subfamily.

The protein resides in the cytoplasm. Specifically dimethylates two adjacent adenosines in the loop of a conserved hairpin near the 3'-end of 16S rRNA in the 30S particle. May play a critical role in biogenesis of 30S subunits. The polypeptide is Probable ribosomal RNA small subunit methyltransferase A (Methanosarcina mazei (strain ATCC BAA-159 / DSM 3647 / Goe1 / Go1 / JCM 11833 / OCM 88) (Methanosarcina frisia)).